Here is a 444-residue protein sequence, read N- to C-terminus: Exopolygalacturonase clone GBGA483 (444 aa).

Residues 1–23 (MVGSHKASGVLLVLLVVMATTIA) form the signal peptide. 5 PbH1 repeats span residues 220–246 (CKNI…HIGR), 247–268 (SNGV…SIGD), 270–290 (TENL…SIGS), 300–321 (VKGV…RIKT), and 330–351 (ASNI…LIDQ). Asparagine 222 carries an N-linked (GlcNAc...) asparagine glycan. Residue aspartate 261 is the Proton donor of the active site. A disulfide bond links cysteine 263 and cysteine 280. Residue histidine 284 is part of the active site. N-linked (GlcNAc...) asparagine glycosylation is present at asparagine 342. 2 disulfide bridges follow: cysteine 391–cysteine 397 and cysteine 420–cysteine 436.

Belongs to the glycosyl hydrolase 28 family.

It is found in the secreted. It localises to the cell wall. It catalyses the reaction [(1-&gt;4)-alpha-D-galacturonosyl](n) + H2O = alpha-D-galacturonate + [(1-&gt;4)-alpha-D-galacturonosyl](n-1). In terms of biological role, may function in depolymerizing pectin during pollen development, germination, and tube growth. Acts as an exo-polygalacturonase. This chain is Exopolygalacturonase clone GBGA483, found in Arabidopsis thaliana (Mouse-ear cress).